The primary structure comprises 169 residues: Der GTPase-activating protein YihI (169 aa).

2 disordered regions span residues 1-100 and 144-169; these read MKPS…AELE and GLSY…LRGN. A compositionally biased stretch (basic residues) spans 10 to 19; sequence SKGHAKARRK. Positions 20-30 are enriched in basic and acidic residues; that stretch reads TREELDQEARD. The segment covering 31-40 has biased composition (basic residues); that stretch reads RKRQKKRRGH. A compositionally biased stretch (polar residues) spans 49–58; that stretch reads GNTSSGSKGQ. The segment covering 147–159 has biased composition (acidic residues); sequence YDDDEEEEEDEKQ. Over residues 160-169 the composition is skewed to basic and acidic residues; it reads EDMMRLLRGN.

The protein belongs to the YihI family. As to quaternary structure, interacts with Der.

In terms of biological role, a GTPase-activating protein (GAP) that modifies Der/EngA GTPase function. May play a role in ribosome biogenesis. This is Der GTPase-activating protein YihI from Escherichia coli (strain SMS-3-5 / SECEC).